The following is a 3432-amino-acid chain: Genome polyprotein (3432 aa).

The interaction with host EXOC1 stretch occupies residues 2-15 (TKKPGGPGKNRAIN). The Cytoplasmic segment spans residues 2–109 (TKKPGGPGKN…RKQNKRGGNE (108 aa)). The segment at 37–72 (LLDGRGPVRFVLALITFFKFTALAPTKALLGRWKAV) is hydrophobic; homodimerization of capsid protein C. A propeptide spans 106–127 (GGNEGSIMWLASLAVVIACAGA) (ER anchor for the capsid protein C, removed in mature form by serine protease NS3). A helical membrane pass occupies residues 110-130 (GSIMWLASLAVVIACAGAMKL). Residues 131 to 253 (SNFQGKLLMT…ATRYLMKTEN (123 aa)) lie on the Extracellular side of the membrane. Asn142 is a glycosylation site (N-linked (GlcNAc...) asparagine; by host). The chain crosses the membrane as a helical span at residues 254–274 (WIIRNPGYAFLAAVLGWMLGS). Residues 275–279 (NNGQR) are Cytoplasmic-facing. Residues 280–294 (VVFTILLLLVAPAYS) traverse the membrane as a helical segment. Residues 295-746 (FNCLGMGNRD…QVFGGAFRTL (452 aa)) are Extracellular-facing. 6 cysteine pairs are disulfide-bonded: Cys297–Cys324, Cys354–Cys410, Cys354–Cys415, Cys368–Cys399, Cys386–Cys410, and Cys386–Cys415. Positions 392–405 (DRGWGNGCGLFGKG) are fusion peptide. Asn448 carries an N-linked (GlcNAc...) asparagine; by host glycan. 2 cysteine pairs are disulfide-bonded: Cys484-Cys581 and Cys598-Cys629. Residues 747 to 767 (FGGMSWITQGLMGALLLWMGV) traverse the membrane as a helical segment. Topologically, residues 768–773 (NARDRS) are cytoplasmic. A helical transmembrane segment spans residues 774-794 (IALAFLATGGVLVFLATNVHA). The Extracellular portion of the chain corresponds to 795–1219 (DTGCAIDITR…AFAEANSGGD (425 aa)). 6 cysteine pairs are disulfide-bonded: Cys798-Cys809, Cys849-Cys937, Cys973-Cys1017, Cys1074-Cys1123, Cys1085-Cys1106, and Cys1107-Cys1110. Residues Asn924 and Asn1001 are each glycosylated (N-linked (GlcNAc...) asparagine; by host). The chain crosses the membrane as a helical span at residues 1220–1240 (VLHLALIAVFKIQPAFLVMNM). Residues 1241 to 1250 (LSTRWTNQEN) are Cytoplasmic-facing. A helical transmembrane segment spans residues 1251–1271 (VILVLGAAFFQLASVDLQIGV). Position 1272 (His1272) is a topological domain, lumenal. A helical membrane pass occupies residues 1273-1293 (GILNAAAIAWMIVRAITFPTT). The Cytoplasmic portion of the chain corresponds to 1294-1309 (SSVTMPVLALLTPGMR). A helical membrane pass occupies residues 1310-1330 (ALYLDTYRIILLVIGICSLLH). Residues 1331-1341 (ERKKTMAKKKG) are Lumenal-facing. A helical transmembrane segment spans residues 1342–1362 (AVLLGLALTSTGWFSPTTIAA). The Cytoplasmic portion of the chain corresponds to 1363-1374 (GLMVCNPNKKRG). Interaction with human SPCS1 stretches follow at residues 1374–1423 (GWPA…GKAT) and 1458–1505 (FHLI…TKRG). The helical transmembrane segment at 1375–1395 (WPATEFLSAVGLMFAIVGGLA) threads the bilayer. Over 1396 to 1398 (ELD) the chain is Lumenal. Residues 1399 to 1419 (IESMSIPFMLAGLMAVSYVVS) form a helical membrane-spanning segment. The Cytoplasmic portion of the chain corresponds to 1420-1476 (GKATDMWLERAADISWEMDAAITGSSRRLDVKLDDDGDFHLIDDPGVPWKVWVLRMS). Positions 1427–1466 (LERAADISWEMDAAITGSSRRLDVKLDDDGDFHLIDDPGV) are interacts with and activates NS3 protease. An intramembrane region (helical) is located at residues 1477–1497 (CIGLAALTPWAIVPAAFGYWL). Topologically, residues 1498–2173 (TLKTTKRGGV…RMALEELPDA (676 aa)) are cytoplasmic. In terms of domain architecture, Peptidase S7 spans 1505 to 1682 (GGVFWDTPSP…DRQEEPVPEA (178 aa)). Catalysis depends on charge relay system; for serine protease NS3 activity residues His1555, Asp1579, and Ser1639. Positions 1685-1841 (PNMLRKRQMT…DSNAPIHDLQ (157 aa)) constitute a Helicase ATP-binding domain. Residues 1689-1692 (RKRQ) are important for RNA-binding. 1698–1705 (LHPGSGKT) lines the ATP pocket. The DEAH box signature appears at 1789 to 1792 (DEAH). A Helicase C-terminal domain is found at 1852-2017 (GYEWITEYAG…GLVAQLYGPE (166 aa)). Lys1893 carries the post-translational modification N6-acetyllysine; by host. A disordered region spans residues 1950-1972 (NPSPITSASAAQRRGRVGRNPNQ). Residues 2168-2172 (EELPD) form a regulates the ATPase activity of NS3 helicase region. A helical transmembrane segment spans residues 2174–2194 (LETITLIVAITVMTGGFFLLM). Topologically, residues 2195–2199 (MQRKG) are lumenal. Residues 2200–2220 (IGKMGLGALVLTLATFFLWAA) constitute an intramembrane region (helical). Position 2221 (Glu2221) is a topological domain, lumenal. A helical membrane pass occupies residues 2222-2242 (VPGTKIAGTLLIALLLMVVLI). The Cytoplasmic portion of the chain corresponds to 2243–2257 (PEPEKQRSQTDNQLA). A helical transmembrane segment spans residues 2258 to 2278 (VFLICVLTVVGVVAANEYGML). Over 2279–2311 (EKTKADLKSMFGGKTQASGLTGLPSMALDLRPA) the chain is Lumenal. An intramembrane region (helical) is located at residues 2312 to 2332 (TAWALYGGSTVVLTPLLKHLI). Over 2333–2368 (TSEYVTTSLASINSQAGSLFVLPRGVPFTDLDLTVG) the chain is Lumenal. The chain crosses the membrane as a helical span at residues 2369–2389 (LVFLGCWGQITLTTFLTAMVL). At 2390–2444 (ATLHYGYMLPGWQAEALRAAQRRTAAGIMKNAVVDGMVATDVPELERTTPLMQKK) the chain is on the cytoplasmic side. The chain crosses the membrane as a helical span at residues 2445–2465 (VGQVLLIGVSVAAFLVNPNVT). Over 2466-2469 (TVRE) the chain is Lumenal. The helical transmembrane segment at 2470-2490 (AGVLVTAATLTLWDNGASAVW) threads the bilayer. The Cytoplasmic segment spans residues 2491-3432 (NSTTATGLCH…DVLIQEDRVI (942 aa)). The mRNA cap 0-1 NS5-type MT domain occupies 2528-2793 (GRPGGRTLGE…DVNLGSGTRA (266 aa)). Ser2583 serves as a coordination point for S-adenosyl-L-methionine. At Ser2583 the chain carries Phosphoserine. Lys2588 (for 2'-O-MTase activity) is an active-site residue. S-adenosyl-L-methionine is bound by residues Gly2613, Trp2614, Thr2631, Lys2632, Asp2658, and Val2659. Catalysis depends on Asp2673, which acts as the For 2'-O-MTase activity. Ile2674 provides a ligand contact to S-adenosyl-L-methionine. Active-site for 2'-O-MTase activity residues include Lys2709 and Glu2745. Position 2747 (Tyr2747) interacts with S-adenosyl-L-methionine. 4 residues coordinate Zn(2+): Glu2967, His2971, Cys2976, and Cys2979. In terms of domain architecture, RdRp catalytic spans 3057-3209 (GKMYADDTAG…KPLDDRFATA (153 aa)). Positions 3244, 3260, and 3379 each coordinate Zn(2+).

This sequence in the N-terminal section; belongs to the class I-like SAM-binding methyltransferase superfamily. mRNA cap 0-1 NS5-type methyltransferase family. Homodimer. Interacts (via N-terminus) with host EXOC1 (via C-terminus); this interaction results in EXOC1 degradation through the proteasome degradation pathway. As to quaternary structure, forms heterodimers with envelope protein E in the endoplasmic reticulum and Golgi. In terms of assembly, homodimer; in the endoplasmic reticulum and Golgi. Interacts with protein prM. Interacts with non-structural protein 1. Interacts with host HSPA5. Homodimer; Homohexamer when secreted. Interacts with envelope protein E. NS1 interacts with NS4B. Interacts with host complement protein CFH; this interaction leads to the degradation of C3. As to quaternary structure, interacts (via N-terminus) with serine protease NS3. In terms of assembly, forms a heterodimer with serine protease NS3. May form homooligomers. Interacts with human SPCS1. Forms a heterodimer with NS2B. Interacts with non-structural protein 2A (via N-terminus). Interacts with NS4B. Interacts with unphosphorylated RNA-directed RNA polymerase NS5; this interaction stimulates RNA-directed RNA polymerase NS5 guanylyltransferase activity. Interacts with host ILF2. As to quaternary structure, interacts with serine protease NS3. In terms of assembly, homodimer. Interacts with host STAT2; this interaction inhibits the phosphorylation of the latter, and, when all viral proteins are present (polyprotein), targets STAT2 for degradation. Interacts with serine protease NS3. Mn(2+) is required as a cofactor. Requires Mg(2+) as cofactor. Specific enzymatic cleavages in vivo yield mature proteins. Cleavages in the lumen of endoplasmic reticulum are performed by host signal peptidase, whereas cleavages in the cytoplasmic side are performed by serine protease NS3. Signal cleavage at the 2K-4B site requires a prior NS3 protease-mediated cleavage at the 4A-2K site. In terms of processing, cleaved in post-Golgi vesicles by a host furin, releasing the mature small envelope protein M, and peptide pr. This cleavage is incomplete as up to 30% of viral particles still carry uncleaved prM. Post-translationally, N-glycosylated. N-glycosylated. The excreted form is glycosylated and this is required for efficient secretion of the protein from infected cells. In terms of processing, acetylated by host KAT5. Acetylation modulates NS3 RNA-binding and unwinding activities and plays an important positive role for viral replication. Post-translationally, phosphorylated on serines residues. This phosphorylation may trigger NS5 nuclear localization.

It localises to the host endoplasmic reticulum membrane. The protein resides in the virion. The protein localises to the host nucleus. Its subcellular location is the host cytoplasm. It is found in the host perinuclear region. It localises to the secreted. The protein resides in the virion membrane. The protein localises to the host cell surface. The enzyme catalyses Selective hydrolysis of -Xaa-Xaa-|-Yaa- bonds in which each of the Xaa can be either Arg or Lys and Yaa can be either Ser or Ala.. It catalyses the reaction RNA(n) + a ribonucleoside 5'-triphosphate = RNA(n+1) + diphosphate. The catalysed reaction is a ribonucleoside 5'-triphosphate + H2O = a ribonucleoside 5'-diphosphate + phosphate + H(+). It carries out the reaction ATP + H2O = ADP + phosphate + H(+). The enzyme catalyses a 5'-end (5'-triphosphoguanosine)-ribonucleoside in mRNA + S-adenosyl-L-methionine = a 5'-end (N(7)-methyl 5'-triphosphoguanosine)-ribonucleoside in mRNA + S-adenosyl-L-homocysteine. It catalyses the reaction a 5'-end (N(7)-methyl 5'-triphosphoguanosine)-ribonucleoside in mRNA + S-adenosyl-L-methionine = a 5'-end (N(7)-methyl 5'-triphosphoguanosine)-(2'-O-methyl-ribonucleoside) in mRNA + S-adenosyl-L-homocysteine + H(+). Plays a role in virus budding by binding to the cell membrane and gathering the viral RNA into a nucleocapsid that forms the core of a mature virus particle. During virus entry, may induce genome penetration into the host cytoplasm after hemifusion induced by the surface proteins. Can migrate to the cell nucleus where it modulates host functions. Overcomes the anti-viral effects of host EXOC1 by sequestering and degrading the latter through the proteasome degradation pathway. Its function is as follows. Inhibits RNA silencing by interfering with host Dicer. In terms of biological role, prevents premature fusion activity of envelope proteins in trans-Golgi by binding to envelope protein E at pH 6.0. After virion release in extracellular space, gets dissociated from E dimers. Functionally, acts as a chaperone for envelope protein E during intracellular virion assembly by masking and inactivating envelope protein E fusion peptide. prM is the only viral peptide matured by host furin in the trans-Golgi network probably to avoid catastrophic activation of the viral fusion activity in acidic Golgi compartment prior to virion release. prM-E cleavage is inefficient, and many virions are only partially matured. These uncleaved prM would play a role in immune evasion. May play a role in virus budding. Exerts cytotoxic effects by activating a mitochondrial apoptotic pathway through M ectodomain. May display a viroporin activity. Its function is as follows. Binds to host cell surface receptor and mediates fusion between viral and cellular membranes. Efficient virus attachment to cell is, at least in part, mediated by host HSPA5. Envelope protein is synthesized in the endoplasmic reticulum in the form of heterodimer with protein prM. They play a role in virion budding in the ER, and the newly formed immature particle is covered with 60 spikes composed of heterodimer between precursor prM and envelope protein E. The virion is transported to the Golgi apparatus where the low pH causes dissociation of PrM-E heterodimers and formation of E homodimers. prM-E cleavage is inefficient, and many virions are only partially matured. These uncleaved prM would play a role in immune evasion. In terms of biological role, involved in immune evasion, pathogenesis and viral replication. Once cleaved off the polyprotein, is targeted to three destinations: the viral replication cycle, the plasma membrane and the extracellular compartment. Essential for viral replication. Required for formation of the replication complex and recruitment of other non-structural proteins to the ER-derived membrane structures. Excreted as a hexameric lipoparticle that plays a role against host immune response. Antagonizing the complement function. Binds to the host macrophages and dendritic cells. Inhibits signal transduction originating from Toll-like receptor 3 (TLR3). Functionally, component of the viral RNA replication complex that functions in virion assembly and antagonizes the host alpha/beta interferon antiviral response. Required cofactor for the serine protease function of NS3. May have membrane-destabilizing activity and form viroporins. Its function is as follows. Displays three enzymatic activities: serine protease, NTPase and RNA helicase. NS3 serine protease, in association with NS2B, performs its autocleavage and cleaves the polyprotein at dibasic sites in the cytoplasm: C-prM, NS2A-NS2B, NS2B-NS3, NS3-NS4A, NS4A-2K and NS4B-NS5. NS3 RNA helicase binds RNA and unwinds dsRNA in the 3' to 5' direction. In terms of biological role, regulates the ATPase activity of the NS3 helicase activity. NS4A allows NS3 helicase to conserve energy during unwinding. Functionally, functions as a signal peptide for NS4B and is required for the interferon antagonism activity of the latter. Induces the formation of ER-derived membrane vesicles where the viral replication takes place. Inhibits interferon (IFN)-induced host STAT1 phosphorylation and nuclear translocation, thereby preventing the establishment of cellular antiviral state by blocking the IFN-alpha/beta pathway. Inhibits STAT2 translocation in the nucleus after IFN-alpha treatment. Its function is as follows. Replicates the viral (+) and (-) RNA genome. Performs the capping of genomes in the cytoplasm. NS5 methylates viral RNA cap at guanine N-7 and ribose 2'-O positions. Besides its role in RNA genome replication, also prevents the establishment of cellular antiviral state by blocking the interferon-alpha/beta (IFN-alpha/beta) signaling pathway. Inhibits host TYK2 and STAT2 phosphorylation, thereby preventing activation of JAK-STAT signaling pathway. The chain is Genome polyprotein from Japanese encephalitis virus (strain SA-14) (JEV).